The following is a 130-amino-acid chain: Small ribosomal subunit protein uS9 (130 aa).

The protein belongs to the universal ribosomal protein uS9 family.

The protein is Small ribosomal subunit protein uS9 of Pectobacterium carotovorum subsp. carotovorum (strain PC1).